The chain runs to 508 residues: Cytochrome c-552 (508 aa).

A signal peptide spans 1 to 23; it reads MNKSYKILLTGSVIAIGAMGLMA. Heme c is bound at residue histidine 103. Heme-binding residues include cysteine 131, cysteine 134, and lysine 135. Cysteine 169, cysteine 172, histidine 173, cysteine 211, cysteine 214, and histidine 215 together coordinate heme c. Glutamate 217, tyrosine 218, lysine 274, and glutamine 276 together coordinate Ca(2+). Tyrosine 218 provides a ligand contact to substrate. Histidine 277 serves as a coordination point for substrate. Heme c is bound by residues histidine 288, cysteine 295, cysteine 298, histidine 299, histidine 313, cysteine 326, cysteine 329, histidine 330, and histidine 405. Residues 485–508 are disordered; the sequence is GRLDPKTLEGMSNKSSWSQTELSQ. Polar residues predominate over residues 494-508; that stretch reads GMSNKSSWSQTELSQ.

It belongs to the cytochrome c-552 family. It depends on Ca(2+) as a cofactor. The cofactor is heme c.

The protein localises to the periplasm. The enzyme catalyses 6 Fe(III)-[cytochrome c] + NH4(+) + 2 H2O = 6 Fe(II)-[cytochrome c] + nitrite + 8 H(+). The protein operates within nitrogen metabolism; nitrate reduction (assimilation). In terms of biological role, catalyzes the reduction of nitrite to ammonia, consuming six electrons in the process. The chain is Cytochrome c-552 from Desulfotalea psychrophila (strain LSv54 / DSM 12343).